The chain runs to 377 residues: Glutamate 5-kinase (377 aa).

K15 provides a ligand contact to ATP. Substrate is bound by residues S56, D143, and N155. Position 175–176 (175–176) interacts with ATP; it reads SD. The PUA domain occupies 281-358; the sequence is KGTLTIDAGA…PDVLIILGIS (78 aa).

The protein belongs to the glutamate 5-kinase family.

It is found in the cytoplasm. The enzyme catalyses L-glutamate + ATP = L-glutamyl 5-phosphate + ADP. It participates in amino-acid biosynthesis; L-proline biosynthesis; L-glutamate 5-semialdehyde from L-glutamate: step 1/2. Its function is as follows. Catalyzes the transfer of a phosphate group to glutamate to form L-glutamate 5-phosphate. This chain is Glutamate 5-kinase, found in Rhodopseudomonas palustris (strain BisA53).